The primary structure comprises 112 residues: Nucleoid-associated protein FTH_1374 (112 aa).

The disordered stretch occupies residues methionine 1–glutamate 27. Residues glutamate 17–glutamate 27 are compositionally biased toward basic and acidic residues.

The protein belongs to the YbaB/EbfC family. Homodimer.

It localises to the cytoplasm. The protein localises to the nucleoid. Functionally, binds to DNA and alters its conformation. May be involved in regulation of gene expression, nucleoid organization and DNA protection. In Francisella tularensis subsp. holarctica (strain OSU18), this protein is Nucleoid-associated protein FTH_1374.